A 149-amino-acid polypeptide reads, in one-letter code: MADQLTDEQIAEFKEAFSLFDKDGDGCITTKELGTVMRSLGQNPTEAELQDMINEVDADGNGTIDFPEFLNLMAKKMKDTDSEEELKEAFRVFDKDQNGFISAAELRHVMTNLGEKLTDEEVDEMIREADVDGDGQINYEEFVKVMMAK.

Ala2 bears the N-acetylalanine mark. EF-hand domains are found at residues 8 to 43 (EQIAEFKEAFSLFDKDGDGCITTKELGTVMRSLGQN), 44 to 79 (PTEAELQDMINEVDADGNGTIDFPEFLNLMAKKMKD), 81 to 116 (DSEEELKEAFRVFDKDQNGFISAAELRHVMTNLGEK), and 117 to 149 (LTDEEVDEMIREADVDGDGQINYEEFVKVMMAK). 14 residues coordinate Ca(2+): Asp21, Asp23, Asp25, Cys27, Glu32, Asp57, Asp59, Asn61, Thr63, Glu68, Asp94, Asp96, Asn98, and Glu105. Lys116 is subject to N6,N6,N6-trimethyllysine. Residues Asp130, Asp132, Asp134, Gln136, and Glu141 each contribute to the Ca(2+) site.

This sequence belongs to the calmodulin family.

In terms of biological role, calmodulin mediates the control of a large number of enzymes, ion channels and other proteins by Ca(2+). Among the enzymes to be stimulated by the calmodulin-Ca(2+) complex are a number of protein kinases and phosphatases. This Oryza sativa subsp. indica (Rice) protein is Calmodulin-2 (CAM2).